The primary structure comprises 248 residues: Probable transcriptional regulatory protein PLES_43501 (248 aa).

It belongs to the TACO1 family.

Its subcellular location is the cytoplasm. The chain is Probable transcriptional regulatory protein PLES_43501 from Pseudomonas aeruginosa (strain LESB58).